The chain runs to 152 residues: Phospholipase A2 pkP2 (152 aa).

Positions 1 to 21 (MNPAHLLVLLAVCVSLLGASA) are cleaved as a signal peptide. Residues 22 to 27 (IPPLPL) constitute a propeptide that is removed on maturation. Disulfide bonds link cysteine 38–cysteine 104, cysteine 54–cysteine 151, cysteine 56–cysteine 72, cysteine 71–cysteine 132, cysteine 78–cysteine 125, cysteine 88–cysteine 118, and cysteine 111–cysteine 123. Residues tyrosine 55, glycine 57, and glycine 59 each contribute to the Ca(2+) site. Histidine 75 is an active-site residue. Residue aspartate 76 participates in Ca(2+) binding. Aspartate 126 is a catalytic residue.

It belongs to the phospholipase A2 family. Group I subfamily. It depends on Ca(2+) as a cofactor.

It is found in the secreted. It carries out the reaction a 1,2-diacyl-sn-glycero-3-phosphocholine + H2O = a 1-acyl-sn-glycero-3-phosphocholine + a fatty acid + H(+). Functionally, PA2 catalyzes the calcium-dependent hydrolysis of the 2-acyl groups in 3-sn-phosphoglycerides. This chain is Phospholipase A2 pkP2, found in Laticauda semifasciata (Black-banded sea krait).